A 237-amino-acid polypeptide reads, in one-letter code: tRNA (guanine-N(7)-)-methyltransferase (237 aa).

4 residues coordinate S-adenosyl-L-methionine: Glu-67, Glu-92, Asp-119, and Asp-141. The active site involves Asp-141. Substrate is bound by residues Lys-145, Asp-177, and 214–217; that span reads TRYE.

This sequence belongs to the class I-like SAM-binding methyltransferase superfamily. TrmB family.

It catalyses the reaction guanosine(46) in tRNA + S-adenosyl-L-methionine = N(7)-methylguanosine(46) in tRNA + S-adenosyl-L-homocysteine. It functions in the pathway tRNA modification; N(7)-methylguanine-tRNA biosynthesis. Its function is as follows. Catalyzes the formation of N(7)-methylguanine at position 46 (m7G46) in tRNA. In Jannaschia sp. (strain CCS1), this protein is tRNA (guanine-N(7)-)-methyltransferase.